We begin with the raw amino-acid sequence, 110 residues long: uncharacterized protein (110 aa).

The interval Ser-86 to Phe-110 is disordered. Positions Lys-95–Pro-104 are enriched in basic residues.

This is an uncharacterized protein from Arabidopsis thaliana (Mouse-ear cress).